The sequence spans 1364 residues: Pleckstrin homology domain-containing family H member 1 (1364 aa).

The stretch at 28–169 forms a coiled coil; the sequence is FRLQASKIRE…VGSLQDALEA (142 aa). Disordered regions lie at residues 184-266, 296-321, 356-395, 487-529, and 546-568; these read GAAE…SPPH, GTKT…PGTP, LHPS…ESPK, PFMD…IKRG, and DACS…SSYS. The span at 237 to 246 shows a compositional bias: polar residues; the sequence is EDSSSSTVHS. Basic and acidic residues predominate over residues 364 to 379; the sequence is LESRARSREEPEKMEM. Residues 509–520 show a composition bias toward polar residues; the sequence is VPSSESRKTSGL. 2 consecutive PH domains span residues 578–672 and 687–796; these read SLEK…SLLK and KPTV…VAAG. S745 is subject to Phosphoserine. The MyTH4 domain maps to 832 to 986; that stretch reads YSKDGLYASL…PSRMEVVSIL (155 aa). The region spanning 997–1333 is the FERM domain; the sequence is FSIPVHFTNG…NHCTTTVNPP (337 aa).

The polypeptide is Pleckstrin homology domain-containing family H member 1 (PLEKHH1) (Homo sapiens (Human)).